Consider the following 340-residue polypeptide: HTH-type transcriptional regulator CelR (340 aa).

Positions 1-61 constitute an HTH lacI-type domain; it reads MERRRRPTLE…PNRAARTLVT (61 aa). Residues 9-28 constitute a DNA-binding region (H-T-H motif); that stretch reads LEMVAALAGVGRGTVSRVIN.

The protein resides in the cytoplasm. Its activity is regulated as follows. Activity is controlled by cytoplasmic cellobiose levels. Binding of CelR to the celE promoter is inhibited specifically by low concentrations of cellobiose, the major end product of cellulases. Activity may also be regulated through post-translational modification. Its function is as follows. Transcriptional regulator that regulates the expression of all six cellulases, encoded by the cel genes (designated celA through celF). Acts as a repressor. Specifically binds to a 14-bp inverted repeat site, which is present in the upstream region of the cellulase genes. This Thermobifida fusca (Thermomonospora fusca) protein is HTH-type transcriptional regulator CelR.